Consider the following 302-residue polypeptide: N-acetylmuramic acid 6-phosphate etherase (302 aa).

Residues 55 to 218 enclose the SIS domain; the sequence is AYPKFDQGGR…STGIMVKSGK (164 aa). Catalysis depends on glutamate 83, which acts as the Proton donor. Glutamate 114 is an active-site residue.

This sequence belongs to the GCKR-like family. MurNAc-6-P etherase subfamily. In terms of assembly, homodimer.

It carries out the reaction N-acetyl-D-muramate 6-phosphate + H2O = N-acetyl-D-glucosamine 6-phosphate + (R)-lactate. The protein operates within amino-sugar metabolism; N-acetylmuramate degradation. Functionally, specifically catalyzes the cleavage of the D-lactyl ether substituent of MurNAc 6-phosphate, producing GlcNAc 6-phosphate and D-lactate. This Levilactobacillus brevis (strain ATCC 367 / BCRC 12310 / CIP 105137 / JCM 1170 / LMG 11437 / NCIMB 947 / NCTC 947) (Lactobacillus brevis) protein is N-acetylmuramic acid 6-phosphate etherase.